A 743-amino-acid polypeptide reads, in one-letter code: MARKLSVILILTFALSVTNPLHELKAAAFPQTTEKISPNWESGINVDLAITTRQYHLQQLFYRYGENNSLSVEGFRKLLQNIGIDKIKRIHIHHDHEHHSDHEHHSDHEHHSDHEHHSHRNHAASGKNKRKALCPDHDSDSSGKDPRNSQGKGAHRSEHASGRRNVKDSVSASEVTSTVYNTVSEGTHFLETIETPRPGKLFPKDVSSSTPPSVTEKSRGSRLAGRKTNESVSEPRKGFMYSRNTNENPQECFNASKLLTSHGMGIQVPLNATEFNYLCPAIINQIDARSCLIHTSEKKAEIPPKTYSLQIAWVGGFIAISIISFLSLLGVILVPLMNRVFFKFLLSFLVALAVGTLSGDAFLHLLPHSHASHHHSHSHEEPAMEMKRGPLFSHLSSQNIEESAYFDSTWKGLTALGGLYFMFLVEHVLTLIKQFKDKKKKNQKKPENDDDVEIKKQLSKYESQLSTNEEKVDTDDRTEGYLRADSQEPSHFDSQQPAILEEEEVMIAHAHPQEVYNEYVPRGCKNKCHSHFHDTLGQSDDLIHHHHDYHHILHHHHHQNHHPHSHSQRYSREELKDAGIATLAWMVIMGDGLHNFSDGLAIGAAFTEGLSSGLSTSVAVFCHELPHELGDFAVLLKAGMTVKQAVLYNALSAMLAYLGMATGIFIGHYAENVSMWIFALTAGLFMYVALVDMVPEMLHNDASDHGCSRWGYFFLQNAGMLLGFGIMLLISIFEHKIVFRINF.

Positions 1–20 are cleaved as a signal peptide; sequence MARKLSVILILTFALSVTNP. The Extracellular portion of the chain corresponds to 21–313; the sequence is LHELKAAAFP…PKTYSLQIAW (293 aa). A glycan (N-linked (GlcNAc...) asparagine) is linked at Asn-67. Residues 96-116 are compositionally biased toward basic and acidic residues; it reads HEHHSDHEHHSDHEHHSDHEH. Disordered stretches follow at residues 96–174 and 190–245; these read HEHH…SASE and LETI…SRNT. The segment covering 117–132 has biased composition (basic residues); sequence HSHRNHAASGKNKRKA. Composition is skewed to basic and acidic residues over residues 133–147 and 155–167; these read LCPDHDSDSSGKDPR and HRSEHASGRRNVK. Residues 206-215 are compositionally biased toward polar residues; that stretch reads VSSSTPPSVT. Residues 227–237 are compositionally biased toward basic and acidic residues; it reads KTNESVSEPRK. N-linked (GlcNAc...) asparagine glycans are attached at residues Asn-229, Asn-254, and Asn-271. The chain crosses the membrane as a helical span at residues 314-334; it reads VGGFIAISIISFLSLLGVILV. Over 335–343 the chain is Cytoplasmic; that stretch reads PLMNRVFFK. The helical transmembrane segment at 344–364 threads the bilayer; it reads FLLSFLVALAVGTLSGDAFLH. The Extracellular segment spans residues 365–411; sequence LLPHSHASHHHSHSHEEPAMEMKRGPLFSHLSSQNIEESAYFDSTWK. Residues 412 to 432 form a helical membrane-spanning segment; it reads GLTALGGLYFMFLVEHVLTLI. Over 433-645 the chain is Cytoplasmic; the sequence is KQFKDKKKKN…LKAGMTVKQA (213 aa). The stretch at 452-474 forms a coiled coil; that stretch reads VEIKKQLSKYESQLSTNEEKVDT. Phosphoserine occurs at positions 459 and 466. A helical transmembrane segment spans residues 646–666; sequence VLYNALSAMLAYLGMATGIFI. Over 667–674 the chain is Extracellular; it reads GHYAENVS. Asn-672 carries N-linked (GlcNAc...) asparagine glycosylation. A helical transmembrane segment spans residues 675–695; the sequence is MWIFALTAGLFMYVALVDMVP. At 696–712 the chain is on the cytoplasmic side; it reads EMLHNDASDHGCSRWGY. Residues 713-733 traverse the membrane as a helical segment; sequence FFLQNAGMLLGFGIMLLISIF. Over 734 to 743 the chain is Extracellular; that stretch reads EHKIVFRINF.

It belongs to the ZIP transporter (TC 2.A.5) family. As to quaternary structure, interacts with SLC39A10; which triggers cells to undergo EMT and mitosis. Found in a complex with SLC39A6, SLC39A10 and with the 'Ser-727' phosphorylated form of STAT3 throughout mitosis. Found in a complex with SLC39A6, SLC39A10 and with NCAM1; this complex controls NCAM1 phosphorylation and integration into focal adhesion complexes during epithelial-to-mesenchymal transition (EMT). Found in a complex with SLC39A6, SLC39A10 and with GSK3B that controls NCAM1 phosphorylation. Post-translationally, cleaved on the N-terminus before locating to the plasma membrane. In terms of processing, N-glycosylated. Phosphorylated by ZAP70 in response to TCR stimulation leading to its activation.

Its subcellular location is the cell membrane. It is found in the cell projection. It localises to the lamellipodium membrane. The protein resides in the membrane raft. The protein localises to the apical cell membrane. The catalysed reaction is Zn(2+)(in) = Zn(2+)(out). Zinc-influx transporter which plays a role in zinc homeostasis and in the induction of epithelial-to-mesenchymal transition (EMT). When associated with SLC39A10, the heterodimer formed by SLC39A10 and SLC39A6 mediates cellular zinc uptake to trigger cells to undergo epithelial- to-mesenchymal transition (EMT). The SLC39A10-SLC39A6 heterodimer also controls NCAM1 phosphorylation and its integration into focal adhesion complexes during EMT. Zinc influx inactivates GSK3B, enabling unphosphorylated SNAI1 in the nucleus to down-regulate adherence genes such as CDH1, causing loss of cell adherence. In addition, the SLC39A10-SLC39A6 heterodimer plays an essentiel role in initiating mitosis by importing zinc into cells to initiate a pathway resulting in the onset of mitosis. Participates in the T-cell receptor signaling regulation by mediating cellular zinc uptake into activated lymphocytes. Regulates the zinc influx necessary for proper meiotic progression to metaphase II (MII) that allows the oocyte-to-egg transition. The sequence is that of Zinc transporter ZIP6 from Pongo abelii (Sumatran orangutan).